A 481-amino-acid chain; its full sequence is Phenylalanine--tRNA ligase alpha subunit (481 aa).

Residues threonine 322, 361–363 (QLE), and tyrosine 401 each bind L-phenylalanine. Glutamate 403 contributes to the Mg(2+) binding site. L-phenylalanine is bound at residue phenylalanine 426.

It belongs to the class-II aminoacyl-tRNA synthetase family. Phe-tRNA synthetase alpha subunit type 2 subfamily. As to quaternary structure, tetramer of two alpha and two beta subunits. Requires Mg(2+) as cofactor.

It localises to the cytoplasm. The catalysed reaction is tRNA(Phe) + L-phenylalanine + ATP = L-phenylalanyl-tRNA(Phe) + AMP + diphosphate + H(+). This chain is Phenylalanine--tRNA ligase alpha subunit, found in Methanoculleus marisnigri (strain ATCC 35101 / DSM 1498 / JR1).